A 304-amino-acid polypeptide reads, in one-letter code: Ribosomal RNA small subunit methyltransferase H (304 aa).

S-adenosyl-L-methionine-binding positions include 47–49 (GGH), Asp66, Phe93, Asp108, and Gln115.

Belongs to the methyltransferase superfamily. RsmH family.

It is found in the cytoplasm. The enzyme catalyses cytidine(1402) in 16S rRNA + S-adenosyl-L-methionine = N(4)-methylcytidine(1402) in 16S rRNA + S-adenosyl-L-homocysteine + H(+). Functionally, specifically methylates the N4 position of cytidine in position 1402 (C1402) of 16S rRNA. This Prochlorococcus marinus (strain NATL2A) protein is Ribosomal RNA small subunit methyltransferase H.